The sequence spans 247 residues: Probable chemoreceptor glutamine deamidase CheD (247 aa).

The tract at residues 204–247 is disordered; that stretch reads KRPAAPQPARPRIELFGGRGTTPGAGSQAAGSPYAANLSRKQEA.

Belongs to the CheD family.

The enzyme catalyses L-glutaminyl-[protein] + H2O = L-glutamyl-[protein] + NH4(+). In terms of biological role, probably deamidates glutamine residues to glutamate on methyl-accepting chemotaxis receptors (MCPs), playing an important role in chemotaxis. The protein is Probable chemoreceptor glutamine deamidase CheD of Burkholderia orbicola (strain MC0-3).